A 123-amino-acid chain; its full sequence is Holo-[acyl-carrier-protein] synthase (123 aa).

The Mg(2+) site is built by D9 and E57.

Belongs to the P-Pant transferase superfamily. AcpS family. The cofactor is Mg(2+).

It localises to the cytoplasm. It carries out the reaction apo-[ACP] + CoA = holo-[ACP] + adenosine 3',5'-bisphosphate + H(+). In terms of biological role, transfers the 4'-phosphopantetheine moiety from coenzyme A to a Ser of acyl-carrier-protein. The protein is Holo-[acyl-carrier-protein] synthase of Streptomyces coelicolor (strain ATCC BAA-471 / A3(2) / M145).